Consider the following 465-residue polypeptide: Argininosuccinate lyase (465 aa).

It belongs to the lyase 1 family. Argininosuccinate lyase subfamily.

Its subcellular location is the cytoplasm. The catalysed reaction is 2-(N(omega)-L-arginino)succinate = fumarate + L-arginine. It participates in amino-acid biosynthesis; L-arginine biosynthesis; L-arginine from L-ornithine and carbamoyl phosphate: step 3/3. This chain is Argininosuccinate lyase, found in Clostridium botulinum (strain Alaska E43 / Type E3).